Reading from the N-terminus, the 158-residue chain is Crossover junction endodeoxyribonuclease RuvC (158 aa).

Catalysis depends on residues aspartate 7, glutamate 67, and aspartate 140. 3 residues coordinate Mg(2+): aspartate 7, glutamate 67, and aspartate 140.

It belongs to the RuvC family. As to quaternary structure, homodimer which binds Holliday junction (HJ) DNA. The HJ becomes 2-fold symmetrical on binding to RuvC with unstacked arms; it has a different conformation from HJ DNA in complex with RuvA. In the full resolvosome a probable DNA-RuvA(4)-RuvB(12)-RuvC(2) complex forms which resolves the HJ. Requires Mg(2+) as cofactor.

It localises to the cytoplasm. It catalyses the reaction Endonucleolytic cleavage at a junction such as a reciprocal single-stranded crossover between two homologous DNA duplexes (Holliday junction).. In terms of biological role, the RuvA-RuvB-RuvC complex processes Holliday junction (HJ) DNA during genetic recombination and DNA repair. Endonuclease that resolves HJ intermediates. Cleaves cruciform DNA by making single-stranded nicks across the HJ at symmetrical positions within the homologous arms, yielding a 5'-phosphate and a 3'-hydroxyl group; requires a central core of homology in the junction. The consensus cleavage sequence is 5'-(A/T)TT(C/G)-3'. Cleavage occurs on the 3'-side of the TT dinucleotide at the point of strand exchange. HJ branch migration catalyzed by RuvA-RuvB allows RuvC to scan DNA until it finds its consensus sequence, where it cleaves and resolves the cruciform DNA. The sequence is that of Crossover junction endodeoxyribonuclease RuvC from Dictyoglomus turgidum (strain DSM 6724 / Z-1310).